Reading from the N-terminus, the 172-residue chain is Small ribosomal subunit protein uS5 (172 aa).

The S5 DRBM domain maps to 15 to 78; it reads YIEKLVNIRR…DKARKRMKSV (64 aa).

This sequence belongs to the universal ribosomal protein uS5 family. As to quaternary structure, part of the 30S ribosomal subunit. Contacts proteins S4 and S8.

Functionally, with S4 and S12 plays an important role in translational accuracy. In terms of biological role, located at the back of the 30S subunit body where it stabilizes the conformation of the head with respect to the body. This is Small ribosomal subunit protein uS5 from Ruthia magnifica subsp. Calyptogena magnifica.